A 766-amino-acid polypeptide reads, in one-letter code: Phosphoribosylformylglycinamidine synthase subunit PurL (766 aa).

The active site involves His-46. Positions 49 and 88 each coordinate ATP. Residue Glu-90 coordinates Mg(2+). Substrate is bound by residues Ser-91–His-94 and Arg-113. His-92 (proton acceptor) is an active-site residue. A Mg(2+)-binding site is contributed by Asp-114. Gln-237 provides a ligand contact to substrate. A Mg(2+)-binding site is contributed by Asp-265. Glu-309–Gln-311 contributes to the substrate binding site. ATP contacts are provided by Asp-520 and Gly-557. A Mg(2+)-binding site is contributed by Asn-558. Ser-560 contributes to the substrate binding site.

The protein belongs to the FGAMS family. In terms of assembly, monomer. Part of the FGAM synthase complex composed of 1 PurL, 1 PurQ and 2 PurS subunits.

It localises to the cytoplasm. It catalyses the reaction N(2)-formyl-N(1)-(5-phospho-beta-D-ribosyl)glycinamide + L-glutamine + ATP + H2O = 2-formamido-N(1)-(5-O-phospho-beta-D-ribosyl)acetamidine + L-glutamate + ADP + phosphate + H(+). Its pathway is purine metabolism; IMP biosynthesis via de novo pathway; 5-amino-1-(5-phospho-D-ribosyl)imidazole from N(2)-formyl-N(1)-(5-phospho-D-ribosyl)glycinamide: step 1/2. Its function is as follows. Part of the phosphoribosylformylglycinamidine synthase complex involved in the purines biosynthetic pathway. Catalyzes the ATP-dependent conversion of formylglycinamide ribonucleotide (FGAR) and glutamine to yield formylglycinamidine ribonucleotide (FGAM) and glutamate. The FGAM synthase complex is composed of three subunits. PurQ produces an ammonia molecule by converting glutamine to glutamate. PurL transfers the ammonia molecule to FGAR to form FGAM in an ATP-dependent manner. PurS interacts with PurQ and PurL and is thought to assist in the transfer of the ammonia molecule from PurQ to PurL. In Synechococcus sp. (strain JA-3-3Ab) (Cyanobacteria bacterium Yellowstone A-Prime), this protein is Phosphoribosylformylglycinamidine synthase subunit PurL.